The following is a 237-amino-acid chain: Sugar fermentation stimulation protein homolog (237 aa).

This sequence belongs to the SfsA family.

The sequence is that of Sugar fermentation stimulation protein homolog from Actinobacillus pleuropneumoniae serotype 3 (strain JL03).